We begin with the raw amino-acid sequence, 220 residues long: uncharacterized protein (220 aa).

The next 7 membrane-spanning stretches (helical) occupy residues 6–26, 33–53, 59–79, 103–123, 126–146, 157–177, and 179–199; these read FSILVDFAAGGLVLASVLIVW, IVRLLAWQGAALAAIPLLRGI, ALIAVGIAVLALRALVLPWLL, LLITAGLTLTAFAITQPVVNL, GVTINAVPAAFAVVLIALFVM, AGFLMLDNGIAATAFLLTAGV, and LIVELGASLDVLFAVIVIGVL.

The protein resides in the cell membrane. This is an uncharacterized protein from Mycobacterium tuberculosis (strain ATCC 25618 / H37Rv).